A 334-amino-acid chain; its full sequence is D-alanine--D-alanine ligase (334 aa).

In terms of domain architecture, ATP-grasp spans 111-315; sequence KRVCLSHGVP…YEDLCIEILR (205 aa). 141-196 contacts ATP; it reads AAEFGLPLMLKAPHEGSTIGIAKVETAEGMQAGFDLCAKYEAVVLVEQFVKGRELT. 3 residues coordinate Mg(2+): Asp268, Glu282, and Asn284.

This sequence belongs to the D-alanine--D-alanine ligase family. Requires Mg(2+) as cofactor. Mn(2+) serves as cofactor.

The protein localises to the cytoplasm. It catalyses the reaction 2 D-alanine + ATP = D-alanyl-D-alanine + ADP + phosphate + H(+). Its pathway is cell wall biogenesis; peptidoglycan biosynthesis. In terms of biological role, cell wall formation. The protein is D-alanine--D-alanine ligase of Herminiimonas arsenicoxydans.